The sequence spans 288 residues: Adenylate kinase (288 aa).

65-70 provides a ligand contact to ATP; the sequence is GVGKGT. The NMP stretch occupies residues 85–114; that stretch reads ATGDLVRDELKSSGPLSKQLAEIVNQGKLV. AMP-binding positions include Thr86, Arg91, 112 to 114, 142 to 145, and Gln149; these read KLV and GFPR. The tract at residues 178–226 is LID; sequence GRRICSECGKNFNVASIDVAGENGAPRISMARLNPPFTVCFKLITRADD. Residue Arg179 participates in ATP binding. AMP is bound by residues Arg223 and Arg234. Residue Gly262 coordinates ATP.

The protein belongs to the adenylate kinase family. In terms of assembly, monomer.

Its subcellular location is the cytoplasm. It carries out the reaction AMP + ATP = 2 ADP. Catalyzes the reversible transfer of the terminal phosphate group between ATP and AMP. Plays an important role in cellular energy homeostasis and in adenine nucleotide metabolism. This is Adenylate kinase (ADK) from Solanum tuberosum (Potato).